The primary structure comprises 717 residues: MIPMKRVHFEYIQIHLASPERIRKWGERTLSNGEVVGEVTRSETINYRTLKPEMDGLFCERIFGPVKDWECHCGQYKRVRYNTDLKNDIVCERCGVEVTESGVRRHRMGHIKLAAPVTHVWYLKGIPSYISIILGLPRKEVEGIVYYNNYETTGSKEIARFIKDKQLLERKDRKIIDQSFFSLDEESELFSGAQAIQTMLSSLDLKTTAQNIREELAATEDWSEEEEDRLRKKRNKLIKRLKIINHFLATGAKPEWMILSILPVLPPDLRPMVQLDGGQFATSDLNDLYRRVINRNNRLSKLNTMLAPEIVVRSEKRMLQEAVDALIDNGKRGRQALVGSNKIPLKSLSDIIKGKQGRFRQNLLGKRVDYSGRSVIVVGPQLKLHQCGLPKEMAIELFQPFVIHNLINQGLANNIKAAKRKLQNNDPSIWEVLKQVIQGHPVLLNRAPTLHRLGIQAFEPILVEGRAIQLHPLVCPAFNADFDGDQMAVHIPLSLEAQTEARLLMLASSNLLSPATGQPIIAPSQDMILGCYYLTTENPKFQIERGHYFSTLKDAVMAYEQKRIHLHSYIWVRFQGRIDTKSTQEEPIEIRIEESGFCSTIYRRYQYRSFKNKKELKTAATPFYNSENAYLMMNKKKMSIPQKPSLESNNLSLTATATATATATATATATATATATATATATNANDHYFVQYVRTTPGRILFNQVIHECLELNEIHP.

The Zn(2+) site is built by cysteine 71, cysteine 73, cysteine 91, and cysteine 94. Positions 481, 483, and 485 each coordinate Mg(2+).

This sequence belongs to the RNA polymerase beta' chain family. RpoC1 subfamily. As to quaternary structure, in plastids the minimal PEP RNA polymerase catalytic core is composed of four subunits: alpha, beta, beta', and beta''. When a (nuclear-encoded) sigma factor is associated with the core the holoenzyme is formed, which can initiate transcription. Mg(2+) serves as cofactor. The cofactor is Zn(2+).

The protein resides in the plastid. It is found in the chloroplast. The enzyme catalyses RNA(n) + a ribonucleoside 5'-triphosphate = RNA(n+1) + diphosphate. DNA-dependent RNA polymerase catalyzes the transcription of DNA into RNA using the four ribonucleoside triphosphates as substrates. This Chlorokybus atmophyticus (Soil alga) protein is DNA-directed RNA polymerase subunit beta'.